A 298-amino-acid polypeptide reads, in one-letter code: N-acetylmuramic acid 6-phosphate etherase (298 aa).

The SIS domain occupies 54 to 217 (CISAIKNHGR…STVTMIKLGK (164 aa)). E82 (proton donor) is an active-site residue. The active site involves E113.

This sequence belongs to the GCKR-like family. MurNAc-6-P etherase subfamily. In terms of assembly, homodimer.

The catalysed reaction is N-acetyl-D-muramate 6-phosphate + H2O = N-acetyl-D-glucosamine 6-phosphate + (R)-lactate. Its pathway is amino-sugar metabolism; N-acetylmuramate degradation. In terms of biological role, specifically catalyzes the cleavage of the D-lactyl ether substituent of MurNAc 6-phosphate, producing GlcNAc 6-phosphate and D-lactate. The chain is N-acetylmuramic acid 6-phosphate etherase from Petrotoga mobilis (strain DSM 10674 / SJ95).